We begin with the raw amino-acid sequence, 312 residues long: Protein-glutamate methylesterase/protein-glutamine glutaminase (312 aa).

The Response regulatory domain maps to 5–122; it reads RVLSVDDSAL…REGMLAYSEM (118 aa). At D56 the chain carries 4-aspartylphosphate. The CheB-type methylesterase domain occupies 152–307; sequence LLSSEKLIAI…QQMLAKISAG (156 aa). Catalysis depends on residues S164, H190, and D249.

It belongs to the CheB family. Phosphorylated by CheA. Phosphorylation of the N-terminal regulatory domain activates the methylesterase activity.

It is found in the cytoplasm. The catalysed reaction is [protein]-L-glutamate 5-O-methyl ester + H2O = L-glutamyl-[protein] + methanol + H(+). It carries out the reaction L-glutaminyl-[protein] + H2O = L-glutamyl-[protein] + NH4(+). In terms of biological role, involved in chemotaxis. Part of a chemotaxis signal transduction system that modulates chemotaxis in response to various stimuli. Catalyzes the demethylation of specific methylglutamate residues introduced into the chemoreceptors (methyl-accepting chemotaxis proteins or MCP) by CheR. Also mediates the irreversible deamidation of specific glutamine residues to glutamic acid. This chain is Protein-glutamate methylesterase/protein-glutamine glutaminase, found in Shigella boydii serotype 4 (strain Sb227).